The chain runs to 60 residues: Metallothionein (60 aa).

Residues M1–C28 form a beta region. C4, C6, C12, C14, C18, C20, C23, C25, C28, C32, C33, C35, C36, C40, C43, C47, C49, C54, C58, and C59 together coordinate a divalent metal cation. The segment at K29 to Q60 is alpha.

This sequence belongs to the metallothionein superfamily. Type 1 family.

In terms of biological role, metallothioneins have a high content of cysteine residues that bind various heavy metals. This is Metallothionein (mt) from Gadus morhua (Atlantic cod).